A 397-amino-acid chain; its full sequence is L-aspartate--L-methionine ligase (397 aa).

The ATP-grasp domain maps to 131-347 (VALNNKARIP…FFNTILKYVK (217 aa)). Residues Lys136, Val171, Lys173, Gly183, Val186, Ile188, Glu215, Gln216, Ile218, Asn223, and Thr246 each coordinate ADP. Asp288 contacts Mg(2+). Residues Leu290 and Ile300 each coordinate ADP. A Mg(2+)-binding site is contributed by Asp301. Residue Arg305 is the Critical for catalysis of the active site.

As to quaternary structure, primarily a monomer in solution. Minor homodimer formation. The cofactor is Mg(2+).

It carries out the reaction L-aspartate + L-methionine + ATP = L-aspartyl-L-methionine + ADP + phosphate + H(+). The protein operates within amino-acid metabolism. Functionally, L-amino acid ligase, which preferentially catalyzes the formation of L-aspartyl-L-methionine dipeptide from L-aspartate and L-methionine in the presence of ATP. Less active with L-asparagine and L-methionine as substrates. Less active with L-aspartate and either L-phenylalanine, L-valine, L-leucine or L-isoleucine as substrates. Decreased activity when L-methionine is substituted with seleno-DL-methionine, L-homocysteine, L-methionine sulfoxide, L-methionine sulfoximine and o-acetyl-L-serine. Decreased activity with acetylation of L-methionine amino group. Decreased activity by modification of L-methionine carboxylate to L-methionine methyl ester. No activity when L-methionine is substituted with L-homoserine. No activity with formylation of L-methionine amino group. No activity by modification of L-methionine carboxylate to L-methionine-glycine carboxylate. No activity when L-aspartate substrate is replaced by analogs such as L-homoserine, DL-aspartate beta-methyl ester, L-glutamate or o-acetyl-L-serine. No activity when L-aspartate amino and alpha-carboxylate groups are modified to L-malate, glycine-L-aspartate, L-aspartate-glycine or N-carbamoyl-DL-aspartate. No activity with L-methionine or L-aspartate as sole substrates. No activity in presence of other nucleoside triphosphates including GTP, CTP, UTP, TTP or ITP. Involved in sulfur amino acid metabolism. The chain is L-aspartate--L-methionine ligase from Staphylococcus aureus (strain NCTC 8325 / PS 47).